The following is a 101-amino-acid chain: MSVEKMTKVEESFQKAMGLKKTVDRWRNSHTHCLWQMALGQRRNPYATLRMQDTMVQELALAKKQLLMVRQAALHQLFEKEHQQYQQELNQMGKAFYVERF.

As to quaternary structure, microtubule inner protein component of sperm flagellar doublet microtubules. Expressed in airway epithelial cells.

The protein resides in the cytoplasm. It is found in the cytoskeleton. The protein localises to the cilium axoneme. It localises to the flagellum axoneme. Microtubule inner protein (MIP) part of the dynein-decorated doublet microtubules (DMTs) in cilia axoneme, which is required for motile cilia beating. The chain is Cilia- and flagella-associated protein 141 from Homo sapiens (Human).